A 700-amino-acid polypeptide reads, in one-letter code: Elongation factor G (700 aa).

In terms of domain architecture, tr-type G spans 8 to 290 (ERYRNIGISA…AVIDYLPSPV (283 aa)). GTP-binding positions include 17 to 24 (AHIDAGKT), 88 to 92 (DTPGH), and 142 to 145 (NKMD).

Belongs to the TRAFAC class translation factor GTPase superfamily. Classic translation factor GTPase family. EF-G/EF-2 subfamily.

The protein resides in the cytoplasm. Its function is as follows. Catalyzes the GTP-dependent ribosomal translocation step during translation elongation. During this step, the ribosome changes from the pre-translocational (PRE) to the post-translocational (POST) state as the newly formed A-site-bound peptidyl-tRNA and P-site-bound deacylated tRNA move to the P and E sites, respectively. Catalyzes the coordinated movement of the two tRNA molecules, the mRNA and conformational changes in the ribosome. This Leptothrix cholodnii (strain ATCC 51168 / LMG 8142 / SP-6) (Leptothrix discophora (strain SP-6)) protein is Elongation factor G.